Here is a 335-residue protein sequence, read N- to C-terminus: Probable pectinesterase 29 (335 aa).

The signal sequence occupies residues 1–24 (MGTHRIFIGLIALCCFCLPHLIEA). Residue Asn43 is glycosylated (N-linked (GlcNAc...) asparagine). The Proton donor role is filled by Asp166. The active-site Nucleophile is the Asp187. Arg248 and Trp250 together coordinate substrate. An N-linked (GlcNAc...) asparagine glycan is attached at Asn262.

Belongs to the pectinesterase family. In terms of tissue distribution, expressed in flower buds.

The protein localises to the secreted. It is found in the cell wall. It carries out the reaction [(1-&gt;4)-alpha-D-galacturonosyl methyl ester](n) + n H2O = [(1-&gt;4)-alpha-D-galacturonosyl](n) + n methanol + n H(+). Its pathway is glycan metabolism; pectin degradation; 2-dehydro-3-deoxy-D-gluconate from pectin: step 1/5. Functionally, acts in the modification of cell walls via demethylesterification of cell wall pectin. The sequence is that of Probable pectinesterase 29 (PME29) from Arabidopsis thaliana (Mouse-ear cress).